The following is a 320-amino-acid chain: Ferrochelatase (320 aa).

The Fe cation site is built by H194 and E275.

The protein belongs to the ferrochelatase family.

The protein localises to the cytoplasm. The catalysed reaction is heme b + 2 H(+) = protoporphyrin IX + Fe(2+). It functions in the pathway porphyrin-containing compound metabolism; protoheme biosynthesis; protoheme from protoporphyrin-IX: step 1/1. Its function is as follows. Catalyzes the ferrous insertion into protoporphyrin IX. The protein is Ferrochelatase of Vibrio cholerae serotype O1 (strain ATCC 39315 / El Tor Inaba N16961).